The primary structure comprises 182 residues: uncharacterized protein (182 aa).

Positions 1 to 23 are enriched in polar residues; sequence MILSDQNFLQTQWKEPQTAQSKN. A disordered region spans residues 1 to 33; the sequence is MILSDQNFLQTQWKEPQTAQSKNTESKCEFHGN.

The protein belongs to the peptidase M24 family.

This is an uncharacterized protein from Caenorhabditis elegans.